The sequence spans 297 residues: MNRKLSIFSAFVTFTMMIVLLMGGTVTKTDSGNGCGTDWPLCHGELIPTNPSVETMIEYSHRAVTGVVGLLIIALCLWTLVAFKDRLDIKIFAFLAFIFMLIQSIVGAGAVVWQQSDLVMALHFGISLISFASLLILTILIMERSGQEFRESVPAFLRKLLYGLLIYTLIVVYTGAFVRHVGATYACVGWPVCSQPTMTFEAWVQMIHRILAGLLFFYTLFVHYTAIRLKHRTSRTGMLFATFFISCQVATGAWIVLGGHATYVPLLHAFLITCYFGVISYLAYHAFRTRKKDSRLR.

Residues 1 to 6 are Cytoplasmic-facing; that stretch reads MNRKLS. A helical membrane pass occupies residues 7–27; it reads IFSAFVTFTMMIVLLMGGTVT. Residues 28-62 lie on the Extracellular side of the membrane; it reads KTDSGNGCGTDWPLCHGELIPTNPSVETMIEYSHR. An intrachain disulfide couples C35 to C42. Residue E58 is part of the active site. H61 lines the heme o pocket. A helical transmembrane segment spans residues 63 to 83; sequence AVTGVVGLLIIALCLWTLVAF. The Cytoplasmic segment spans residues 84 to 90; sequence KDRLDIK. A helical transmembrane segment spans residues 91 to 111; that stretch reads IFAFLAFIFMLIQSIVGAGAV. Residues 112–121 lie on the Extracellular side of the membrane; the sequence is VWQQSDLVMA. The helical transmembrane segment at 122-142 threads the bilayer; that stretch reads LHFGISLISFASLLILTILIM. A heme o-binding site is contributed by H123. Residues 143 to 160 lie on the Cytoplasmic side of the membrane; it reads ERSGQEFRESVPAFLRKL. The helical transmembrane segment at 161–181 threads the bilayer; that stretch reads LYGLLIYTLIVVYTGAFVRHV. At 182-201 the chain is on the extracellular side; sequence GATYACVGWPVCSQPTMTFE. Cysteines 187 and 193 form a disulfide. The chain crosses the membrane as a helical span at residues 202 to 222; the sequence is AWVQMIHRILAGLLFFYTLFV. H208 is a heme b binding site. At 223 to 236 the chain is on the cytoplasmic side; the sequence is HYTAIRLKHRTSRT. A helical transmembrane segment spans residues 237–257; that stretch reads GMLFATFFISCQVATGAWIVL. The Extracellular portion of the chain corresponds to 258–262; that stretch reads GGHAT. The helical transmembrane segment at 263-283 threads the bilayer; the sequence is YVPLLHAFLITCYFGVISYLA. H268 serves as a coordination point for heme b. At 284–297 the chain is on the cytoplasmic side; that stretch reads YHAFRTRKKDSRLR.

Belongs to the COX15/CtaA family. Type 1 subfamily. As to quaternary structure, interacts with CtaB. The cofactor is heme b.

The protein resides in the cell membrane. It catalyses the reaction Fe(II)-heme o + 2 A + H2O = Fe(II)-heme a + 2 AH2. The protein operates within porphyrin-containing compound metabolism; heme A biosynthesis; heme A from heme O: step 1/1. Its function is as follows. Catalyzes the conversion of heme O to heme A by two successive hydroxylations of the methyl group at C8. The first hydroxylation forms heme I, the second hydroxylation results in an unstable dihydroxymethyl group, which spontaneously dehydrates, resulting in the formyl group of heme A. The protein is Heme A synthase of Exiguobacterium sibiricum (strain DSM 17290 / CCUG 55495 / CIP 109462 / JCM 13490 / 255-15).